The following is a 934-amino-acid chain: Complement component C6 (934 aa).

The N-terminal stretch at 1–21 is a signal peptide; it reads MTRHLTLCFILLVMLIDKSEA. 11 disulfide bridges follow: Cys22/Cys61, Cys24/Cys65, Cys35/Cys73, Cys39/Cys78, Cys82/Cys117, Cys93/Cys127, Cys96/Cys133, Cys140/Cys151, Cys146/Cys164, Cys158/Cys173, and Cys180/Cys218. TSP type-1 domains follow at residues 22–79 and 81–134; these read CFCD…QTCP and NCVL…KLCK. Residues 138–175 form the LDL-receptor class A domain; it reads TNCKNKFLCDSGRCIPSKLECNGENDCGDNSDERNCGR. Positions 156, 159, 161, 163, 169, and 170 each coordinate Ca(2+). Residues 176–522 enclose the MACPF domain; sequence TKPVCTRIYT…EYAAKFDPCQ (347 aa). Residues 278 to 290 traverse the membrane as a beta stranded segment; it reads FFPIPIFHFSEKN. Residue Asn324 is glycosylated (N-linked (GlcNAc...) asparagine). 16 disulfide bridges follow: Cys399–Cys420, Cys499–Cys623, Cys521–Cys570, Cys523–Cys539, Cys526–Cys541, Cys543–Cys552, Cys577–Cys611, Cys589–Cys601, Cys644–Cys686, Cys672–Cys699, Cys704–Cys746, Cys732–Cys761, Cys773–Cys823, Cys784–Cys801, Cys786–Cys837, and Cys793–Cys816. A beta stranded membrane pass occupies residues 402 to 415; the sequence is YETKKLKFLYMEIH. The EGF-like domain occupies 523-553; that stretch reads CAPCPNNGRPRLSGTECLCVCQSGTYGENCE. Residues 565 to 612 enclose the TSP type-1 3 domain; the sequence is DGNWGCWSSWSACNAAYRRSRTRECNNPAPQRGGQSCGGKDQQEEDCT. CCP stretches follow at residues 611-688 and 689-765; these read CTVS…RCLP and DRTW…EQAI. Sushi domains are found at residues 642–701 and 702–763; these read SGCS…ECQR and TSCL…TCEQ. A C5b-binding domain region spans residues 642–934; it reads SGCSQPPLPE…EILNPGRCPD (293 aa). The segment at 766–840 is factor I module (FIM) 1; sequence LTKSKDLCPP…FVHSGSCQEG (75 aa). In terms of domain architecture, Kazal-like 1 spans 785 to 839; that stretch reads ICMSPEEDCSAYSEDLCIFDGGSSQYFTSSACKFLAGKCLNNTQSHFVHSGSCQE. N-linked (GlcNAc...) asparagine glycans are attached at residues Asn825, Asn855, and Asn872. A factor I module (FIM) 2 region spans residues 858 to 934; that stretch reads KRVSCGYNTC…EILNPGRCPD (77 aa). Disulfide bonds link Cys862–Cys873, Cys867–Cys919, Cys880–Cys897, Cys882–Cys932, and Cys888–Cys912. The Kazal-like 2 domain occupies 876–934; that stretch reads HTSNCVCLLPPQCSKDENQLYCVKIGSSMREKTVNICTLGAVRCANIKVEILNPGRCPD.

This sequence belongs to the complement C6/C7/C8/C9 family. As to quaternary structure, component of the membrane attack complex (MAC), composed of complement C5b, C6, C7, C8A, C8B, C8G and multiple copies of the pore-forming subunit C9. All cysteine residues are assumed to be cross-linked to one another. Individual modules containing an even number of conserved cysteine residues are supposed to have disulfide linkages only within the same module.

The protein resides in the secreted. Its subcellular location is the target cell membrane. Its activity is regulated as follows. Membrane attack complex (MAC) assembly is inhibited by CD59, thereby protecting self-cells from damage during complement activation. MAC assembly is also inhibited by clusterin (CLU) chaperones that inhibit polymerization of C9. In terms of biological role, component of the membrane attack complex (MAC), a multiprotein complex activated by the complement cascade, which inserts into a target cell membrane and forms a pore, leading to target cell membrane rupture and cell lysis. The MAC is initiated by proteolytic cleavage of C5 into complement C5b in response to the classical, alternative, lectin and GZMK complement pathways. The complement pathways consist in a cascade of proteins that leads to phagocytosis and breakdown of pathogens and signaling that strengthens the adaptive immune system. Together with component C5b, involved in MAC complex assembly: complement C5b and C6 associate with the outer leaflet of target cell membrane, reducing the energy for membrane bending. The polypeptide is Complement component C6 (Mus musculus (Mouse)).